The sequence spans 72 residues: Large ribosomal subunit protein uL29 (72 aa).

Belongs to the universal ribosomal protein uL29 family.

The sequence is that of Large ribosomal subunit protein uL29 from Chlamydia felis (strain Fe/C-56) (Chlamydophila felis).